The chain runs to 473 residues: Siroheme synthase (473 aa).

Residues methionine 1–leucine 203 form a precorrin-2 dehydrogenase /sirohydrochlorin ferrochelatase region. NAD(+) is bound by residues alanine 22 to valine 23 and proline 43 to arginine 44. At serine 128 the chain carries Phosphoserine. Positions glycine 216 to alanine 473 are uroporphyrinogen-III C-methyltransferase. Proline 225 provides a ligand contact to S-adenosyl-L-methionine. Aspartate 248 functions as the Proton acceptor in the catalytic mechanism. The Proton donor role is filled by lysine 270. Residues glycine 302–aspartate 304, isoleucine 307, threonine 332–alanine 333, methionine 384, and glycine 413 each bind S-adenosyl-L-methionine.

The protein in the N-terminal section; belongs to the precorrin-2 dehydrogenase / sirohydrochlorin ferrochelatase family. In the C-terminal section; belongs to the precorrin methyltransferase family.

The catalysed reaction is uroporphyrinogen III + 2 S-adenosyl-L-methionine = precorrin-2 + 2 S-adenosyl-L-homocysteine + H(+). It catalyses the reaction precorrin-2 + NAD(+) = sirohydrochlorin + NADH + 2 H(+). It carries out the reaction siroheme + 2 H(+) = sirohydrochlorin + Fe(2+). The protein operates within cofactor biosynthesis; adenosylcobalamin biosynthesis; precorrin-2 from uroporphyrinogen III: step 1/1. Its pathway is cofactor biosynthesis; adenosylcobalamin biosynthesis; sirohydrochlorin from precorrin-2: step 1/1. It participates in porphyrin-containing compound metabolism; siroheme biosynthesis; precorrin-2 from uroporphyrinogen III: step 1/1. It functions in the pathway porphyrin-containing compound metabolism; siroheme biosynthesis; siroheme from sirohydrochlorin: step 1/1. The protein operates within porphyrin-containing compound metabolism; siroheme biosynthesis; sirohydrochlorin from precorrin-2: step 1/1. Functionally, multifunctional enzyme that catalyzes the SAM-dependent methylations of uroporphyrinogen III at position C-2 and C-7 to form precorrin-2 via precorrin-1. Then it catalyzes the NAD-dependent ring dehydrogenation of precorrin-2 to yield sirohydrochlorin. Finally, it catalyzes the ferrochelation of sirohydrochlorin to yield siroheme. This is Siroheme synthase from Bordetella pertussis (strain Tohama I / ATCC BAA-589 / NCTC 13251).